The primary structure comprises 157 residues: Nascent polypeptide-associated complex subunit beta (157 aa).

The tract at residues 1 to 31 is disordered; the sequence is MPVDPEKLAKLQKSTAKKVGGSRVKAKKGVK. In terms of domain architecture, NAC-A/B spans 33-98; that stretch reads EQDDTKLIET…PQEKNITQLI (66 aa). Positions 125-157 are disordered; the sequence is NPKDFGAAGEAGATEEANEDIPDLVDQKFDDVE. A compositionally biased stretch (low complexity) spans 130–139; the sequence is GAAGEAGATE.

The protein belongs to the NAC-beta family. As to quaternary structure, part of the nascent polypeptide-associated complex (NAC), consisting of EGD2 and EGD1. NAC associates with ribosomes via EGD1.

It localises to the cytoplasm. Its subcellular location is the nucleus. Component of the nascent polypeptide-associated complex (NAC), a dynamic component of the ribosomal exit tunnel, protecting the emerging polypeptides from interaction with other cytoplasmic proteins to ensure appropriate nascent protein targeting. The NAC complex also promotes mitochondrial protein import by enhancing productive ribosome interactions with the outer mitochondrial membrane and blocks the inappropriate interaction of ribosomes translating non-secretory nascent polypeptides with translocation sites in the membrane of the endoplasmic reticulum. EGD1 may act as a transcription factor that exert a negative effect on the expression of several genes that are transcribed by RNA polymerase II. This chain is Nascent polypeptide-associated complex subunit beta (EGD1), found in Lodderomyces elongisporus (strain ATCC 11503 / CBS 2605 / JCM 1781 / NBRC 1676 / NRRL YB-4239) (Yeast).